The chain runs to 265 residues: Leucyl/phenylalanyl-tRNA--protein transferase (265 aa).

Residues 244 to 265 (LDTGPDPASSSVTEISLRPAAP) form a disordered region.

It belongs to the L/F-transferase family.

Its subcellular location is the cytoplasm. The catalysed reaction is N-terminal L-lysyl-[protein] + L-leucyl-tRNA(Leu) = N-terminal L-leucyl-L-lysyl-[protein] + tRNA(Leu) + H(+). It carries out the reaction N-terminal L-arginyl-[protein] + L-leucyl-tRNA(Leu) = N-terminal L-leucyl-L-arginyl-[protein] + tRNA(Leu) + H(+). The enzyme catalyses L-phenylalanyl-tRNA(Phe) + an N-terminal L-alpha-aminoacyl-[protein] = an N-terminal L-phenylalanyl-L-alpha-aminoacyl-[protein] + tRNA(Phe). Functionally, functions in the N-end rule pathway of protein degradation where it conjugates Leu, Phe and, less efficiently, Met from aminoacyl-tRNAs to the N-termini of proteins containing an N-terminal arginine or lysine. The chain is Leucyl/phenylalanyl-tRNA--protein transferase from Methylibium petroleiphilum (strain ATCC BAA-1232 / LMG 22953 / PM1).